A 428-amino-acid polypeptide reads, in one-letter code: Light-independent protochlorophyllide reductase subunit N (428 aa).

Positions 31, 56, and 117 each coordinate [4Fe-4S] cluster.

The protein belongs to the BchN/ChlN family. Protochlorophyllide reductase is composed of three subunits; BchL, BchN and BchB. Forms a heterotetramer of two BchB and two BchN subunits. [4Fe-4S] cluster is required as a cofactor.

It catalyses the reaction chlorophyllide a + oxidized 2[4Fe-4S]-[ferredoxin] + 2 ADP + 2 phosphate = protochlorophyllide a + reduced 2[4Fe-4S]-[ferredoxin] + 2 ATP + 2 H2O. Its pathway is porphyrin-containing compound metabolism; bacteriochlorophyll biosynthesis (light-independent). Its function is as follows. Component of the dark-operative protochlorophyllide reductase (DPOR) that uses Mg-ATP and reduced ferredoxin to reduce ring D of protochlorophyllide (Pchlide) to form chlorophyllide a (Chlide). This reaction is light-independent. The NB-protein (BchN-BchB) is the catalytic component of the complex. The protein is Light-independent protochlorophyllide reductase subunit N of Rhodopseudomonas palustris (strain BisB18).